Consider the following 316-residue polypeptide: Aspartate carbamoyltransferase catalytic subunit (316 aa).

R56 and T57 together coordinate carbamoyl phosphate. K84 contributes to the L-aspartate binding site. Carbamoyl phosphate-binding residues include R106, H139, and Q142. The L-aspartate site is built by R172 and R226. Carbamoyl phosphate-binding residues include G267 and P268.

Belongs to the aspartate/ornithine carbamoyltransferase superfamily. ATCase family. As to quaternary structure, heterododecamer (2C3:3R2) of six catalytic PyrB chains organized as two trimers (C3), and six regulatory PyrI chains organized as three dimers (R2).

The catalysed reaction is carbamoyl phosphate + L-aspartate = N-carbamoyl-L-aspartate + phosphate + H(+). It participates in pyrimidine metabolism; UMP biosynthesis via de novo pathway; (S)-dihydroorotate from bicarbonate: step 2/3. Functionally, catalyzes the condensation of carbamoyl phosphate and aspartate to form carbamoyl aspartate and inorganic phosphate, the committed step in the de novo pyrimidine nucleotide biosynthesis pathway. The polypeptide is Aspartate carbamoyltransferase catalytic subunit (Mycobacterium sp. (strain MCS)).